Consider the following 266-residue polypeptide: MAGNFWQSSHHQQWILDKQDLIRERQHDLKTLSEEEYQKLFMFFANIIQVLGEQLKLRQQVIATATVYFKRFYARNSLKCIDPLLLAPTCILLSSKVEEFGVISNSRLITTCQTVIKNKFSYAYQQEFPYRTNHILECEFYLLENLDCCLIVYQPYRPLLQLMQDIGQEEQLLTLTWRLINDSLRTDVSLLYPPYQIAIGCLQIACVILQKELKSWFAELNVDMDKVQEIARAIVNLFELWKGYDEKKEIQALLEKMPKPKPHPQR.

Residues 47–151 (IIQVLGEQLK…LLENLDCCLI (105 aa)) enclose the Cyclin N-terminal domain.

It belongs to the cyclin family. Cyclin C subfamily. Component of the Cdk8 module of the Mediator complex.

It is found in the nucleus. In terms of biological role, component of the Mediator complex, a coactivator involved in regulated gene transcription of nearly all RNA polymerase II-dependent genes. Mediator functions as a bridge to convey information from gene-specific regulatory proteins to the basal RNA polymerase II transcription machinery. Mediator is recruited to promoters by direct interactions with regulatory proteins and serves as a scaffold for the assembly of a functional preinitiation complex with RNA polymerase II and the general transcription factors. Binds to and activates cyclin-dependent kinase Cdk8 that phosphorylates the CTD (C-terminal domain) of the large subunit of RNA polymerase II (RNAp II), which may inhibit the formation of a transcription initiation complex. This chain is Cyclin-C (CycC), found in Anopheles gambiae (African malaria mosquito).